The sequence spans 232 residues: Fibrillarin-like rRNA/tRNA 2'-O-methyltransferase (232 aa).

Residues 87–88 (TT), 105–106 (EF), 130–131 (DA), and 150–153 (DVAQ) each bind S-adenosyl-L-methionine.

This sequence belongs to the methyltransferase superfamily. Fibrillarin family. Interacts with nop5. Component of box C/D small ribonucleoprotein (sRNP) particles that contain rpl7ae, FlpA and nop5, plus a guide RNA.

In terms of biological role, involved in pre-rRNA and tRNA processing. Utilizes the methyl donor S-adenosyl-L-methionine to catalyze the site-specific 2'-hydroxyl methylation of ribose moieties in rRNA and tRNA. Site specificity is provided by a guide RNA that base pairs with the substrate. Methylation occurs at a characteristic distance from the sequence involved in base pairing with the guide RNA. The chain is Fibrillarin-like rRNA/tRNA 2'-O-methyltransferase from Methanococcus maripaludis (strain C7 / ATCC BAA-1331).